The chain runs to 385 residues: Odorant receptor 82a (385 aa).

The Cytoplasmic portion of the chain corresponds to 1–32 (MGRLFQLQEYCLRAMGHKDDMDSTDSTALSLK). The chain crosses the membrane as a helical span at residues 33-53 (HISSLIFVISAQYPLISYVAY). The Extracellular segment spans residues 54–62 (NRNDMEKVT). The helical transmembrane segment at 63–83 (ACLSVVFTNMLTVIKISTFLA) threads the bilayer. At 84–131 (NRKDFWEMIHRFRKMHEQSASHIPRYREGLDYVAEANKLASFLGRAYC) the chain is on the cytoplasmic side. Residues 132–152 (VSCGLTGLYFMLGPIVKIGVC) form a helical membrane-spanning segment. Residues 153-186 (RWHGTTCDKELPMPMKFPFNDLESPGYEVCFLYT) lie on the Extracellular side of the membrane. Residues 187 to 207 (VLVTVVVVAYASAVDGLFISF) form a helical membrane-spanning segment. The Cytoplasmic segment spans residues 208-257 (AINLRAHFQTLQRQIENWEFPSSEPDTQIRLKSIVEYHVLLLSLSRKLRS). The chain crosses the membrane as a helical span at residues 258–278 (IYTPTVMGQFVITSLQVGVII). The Extracellular portion of the chain corresponds to 279–290 (YQLVTNMDSVMD). The helical transmembrane segment at 291–311 (LLLYASFFGSIMLQLFIYCYG) threads the bilayer. Residues 312–357 (GEIIKAESLQVDTAVRLSNWHLASPKTRTSLSLIILQSQKEVLIRA) lie on the Cytoplasmic side of the membrane. Residues 358–378 (GFFVASLANFVGICRTALSLI) traverse the membrane as a helical segment. The Extracellular portion of the chain corresponds to 379-385 (TLIKSIE).

Belongs to the insect chemoreceptor superfamily. Heteromeric odorant receptor channel (TC 1.A.69) family. Or1a subfamily. As to quaternary structure, interacts with Orco. Complexes exist early in the endomembrane system in olfactory sensory neurons (OSNs), coupling these complexes to the conserved ciliary trafficking pathway. As to expression, expressed in olfactory sensory neurons in the antenna.

It is found in the cell membrane. Odorant receptor which mediates acceptance or avoidance behavior, depending on its substrates. The odorant receptor repertoire encodes a large collection of odor stimuli that vary widely in identity, intensity, and duration. May form a complex with Orco to form odorant-sensing units, providing sensitive and prolonged odorant signaling and calcium permeability. This chain is Odorant receptor 82a (Or82a), found in Drosophila melanogaster (Fruit fly).